The following is a 468-amino-acid chain: Argininosuccinate synthase (468 aa).

Residues 10–18 (AYSGGLDTS) and A37 each bind ATP. L-citrulline contacts are provided by Y90 and S95. An ATP-binding site is contributed by G120. L-aspartate contacts are provided by T122, N126, and D127. N126 contacts L-citrulline. 5 residues coordinate L-citrulline: R130, S182, S191, E267, and Y279. A compositionally biased stretch (low complexity) spans 445–457 (PVAAKATAKPVKA). The interval 445 to 468 (PVAAKATAKPVKAPVKKPIAKKKG) is disordered. Positions 458–468 (PVKKPIAKKKG) are enriched in basic residues.

This sequence belongs to the argininosuccinate synthase family. Type 1 subfamily. In terms of assembly, homotetramer.

The protein localises to the cytoplasm. It carries out the reaction L-citrulline + L-aspartate + ATP = 2-(N(omega)-L-arginino)succinate + AMP + diphosphate + H(+). Its pathway is amino-acid biosynthesis; L-arginine biosynthesis; L-arginine from L-ornithine and carbamoyl phosphate: step 2/3. The chain is Argininosuccinate synthase from Dechloromonas aromatica (strain RCB).